The following is a 163-amino-acid chain: MHRSHPSTTRRKHLIKEMMEDDYELPTEQQQIVRVVRSCGNNLHEVETATPESENFLVSMPNKYRKNMWVKRGDFLLVEPIEEGDKVKAEISKILTNDHVKEYTKAGIWPERFAKNPPQEAKAQNDDEDSDFEDDLTPNTNRPVQESDEEDEDTDTESSDEED.

The region spanning 18–96 (MMEDDYELPT…VKAEISKILT (79 aa)) is the S1-like domain. The tract at residues 106–163 (AGIWPERFAKNPPQEAKAQNDDEDSDFEDDLTPNTNRPVQESDEEDEDTDTESSDEED) is disordered. Acidic residues-rich tracts occupy residues 126–136 (DDEDSDFEDDL) and 146–163 (ESDE…DEED).

It belongs to the EIF1AD family.

This chain is Probable RNA-binding protein EIF1AD, found in Drosophila pseudoobscura pseudoobscura (Fruit fly).